The sequence spans 250 residues: DNA repair protein RecO (250 aa).

The protein belongs to the RecO family.

Involved in DNA repair and RecF pathway recombination. This Staphylococcus aureus (strain Mu3 / ATCC 700698) protein is DNA repair protein RecO.